The sequence spans 701 residues: Glycine--tRNA ligase beta subunit (701 aa).

This sequence belongs to the class-II aminoacyl-tRNA synthetase family. Tetramer of two alpha and two beta subunits.

It localises to the cytoplasm. The catalysed reaction is tRNA(Gly) + glycine + ATP = glycyl-tRNA(Gly) + AMP + diphosphate. The chain is Glycine--tRNA ligase beta subunit from Helicobacter pylori (strain HPAG1).